The primary structure comprises 216 residues: Ras-related protein Rab-5C (216 aa).

GTP is bound by residues serine 30, alanine 31, glycine 33, lysine 34, serine 35, serine 36, histidine 47, glutamate 48, threonine 53, and glycine 79. Serine 35 provides a ligand contact to Mg(2+). 2 consecutive short sequence motifs (switch) follow at residues 45 to 57 and 78 to 94; these read QFHE…IGAA and AGQE…YRGA. Threonine 53 is a binding site for Mg(2+). The residue at position 85 (serine 85) is a Phosphoserine. Residues asparagine 134, lysine 135, aspartate 137, alanine 165, and lysine 166 each coordinate GTP. A disordered region spans residues 185 to 216; sequence NEPQNAAGAPSRNRGVDLQENSPASRSQCCSN. Residues 203–216 show a composition bias toward polar residues; the sequence is QENSPASRSQCCSN. S-geranylgeranyl cysteine attachment occurs at residues cysteine 213 and cysteine 214.

Belongs to the small GTPase superfamily. Rab family. In terms of assembly, interacts with EEA1 and INCA1. Interacts with GDI1, GDI2, CHML and CHM; phosphorylation at Ser-85 disrupts this interaction. Requires Mg(2+) as cofactor. In terms of processing, phosphorylation of Ser-85 in the switch II region by LRRK2 prevents the association of RAB regulatory proteins, including CHM, CHML and RAB GDP dissociation inhibitors GDI1 and GDI2.

The protein localises to the cell membrane. The protein resides in the early endosome membrane. It is found in the melanosome. The enzyme catalyses GTP + H2O = GDP + phosphate + H(+). Its activity is regulated as follows. Regulated by guanine nucleotide exchange factors (GEFs) which promote the exchange of bound GDP for free GTP. Regulated by GTPase activating proteins (GAPs) which increase the GTP hydrolysis activity. Inhibited by GDP dissociation inhibitors (GDIs). In terms of biological role, the small GTPases Rab are key regulators of intracellular membrane trafficking, from the formation of transport vesicles to their fusion with membranes. Rabs cycle between an inactive GDP-bound form and an active GTP-bound form that is able to recruit to membranes different sets of downstream effectors directly responsible for vesicle formation, movement, tethering and fusion. The protein is Ras-related protein Rab-5C (RAB5C) of Canis lupus familiaris (Dog).